Reading from the N-terminus, the 364-residue chain is L-carnitine dehydrogenase (364 aa).

Residue Gly11–Gly16 participates in NAD(+) binding. Positions Lys336–Gly364 are disordered. The span at Ala348–Gly364 shows a compositional bias: basic residues.

The protein belongs to the 3-hydroxyacyl-CoA dehydrogenase family. L-carnitine dehydrogenase subfamily. As to quaternary structure, homodimer.

It is found in the cytoplasm. It carries out the reaction carnitine + NAD(+) = 3-dehydrocarnitine + NADH + H(+). The protein operates within amine and polyamine metabolism; carnitine metabolism. Its function is as follows. Catalyzes the NAD(+)-dependent oxidation of L-carnitine to 3-dehydrocarnitine. The protein is L-carnitine dehydrogenase of Mesorhizobium japonicum (strain LMG 29417 / CECT 9101 / MAFF 303099) (Mesorhizobium loti (strain MAFF 303099)).